The following is a 255-amino-acid chain: tRNA (guanine-N(7)-)-methyltransferase (255 aa).

A compositionally biased stretch (basic and acidic residues) spans 1-11; it reads MSISDNSRDQL. The segment at 1–25 is disordered; that stretch reads MSISDNSRDQLGELPAGRPLQSDFD. Residues E83, E108, D135, and D158 each coordinate S-adenosyl-L-methionine. D158 is an active-site residue. A substrate-binding site is contributed by K162. Residues 164-169 are interaction with RNA; the sequence is RHNKRR. Substrate contacts are provided by residues D194 and 232–235; that span reads TKFE.

This sequence belongs to the class I-like SAM-binding methyltransferase superfamily. TrmB family.

The enzyme catalyses guanosine(46) in tRNA + S-adenosyl-L-methionine = N(7)-methylguanosine(46) in tRNA + S-adenosyl-L-homocysteine. The protein operates within tRNA modification; N(7)-methylguanine-tRNA biosynthesis. In terms of biological role, catalyzes the formation of N(7)-methylguanine at position 46 (m7G46) in tRNA. The polypeptide is tRNA (guanine-N(7)-)-methyltransferase (Corynebacterium glutamicum (strain ATCC 13032 / DSM 20300 / JCM 1318 / BCRC 11384 / CCUG 27702 / LMG 3730 / NBRC 12168 / NCIMB 10025 / NRRL B-2784 / 534)).